Reading from the N-terminus, the 131-residue chain is Protein NrdI (131 aa).

The protein belongs to the NrdI family.

Its function is as follows. Probably involved in ribonucleotide reductase function. This Bacillus licheniformis (strain ATCC 14580 / DSM 13 / JCM 2505 / CCUG 7422 / NBRC 12200 / NCIMB 9375 / NCTC 10341 / NRRL NRS-1264 / Gibson 46) protein is Protein NrdI.